We begin with the raw amino-acid sequence, 286 residues long: Protoheme IX farnesyltransferase (286 aa).

Transmembrane regions (helical) follow at residues 14–31, 38–58, 94–114, 135–155, 165–185, 207–227, 228–248, and 262–282; these read FRLT…YILA, WLNL…ANII, LFLI…ALIL, IAVF…WIAV, VLFA…AWVL, TATI…LPYL, FGMS…LFFF, and ALLL…AFVL.

The protein belongs to the UbiA prenyltransferase family. Protoheme IX farnesyltransferase subfamily.

The protein localises to the cell inner membrane. It catalyses the reaction heme b + (2E,6E)-farnesyl diphosphate + H2O = Fe(II)-heme o + diphosphate. The protein operates within porphyrin-containing compound metabolism; heme O biosynthesis; heme O from protoheme: step 1/1. Functionally, converts heme B (protoheme IX) to heme O by substitution of the vinyl group on carbon 2 of heme B porphyrin ring with a hydroxyethyl farnesyl side group. This chain is Protoheme IX farnesyltransferase, found in Cytophaga hutchinsonii (strain ATCC 33406 / DSM 1761 / CIP 103989 / NBRC 15051 / NCIMB 9469 / D465).